Here is a 1322-residue protein sequence, read N- to C-terminus: Centrosome-associated protein Alms1a (1322 aa).

Disordered stretches follow at residues Met1–Arg26, Thr53–Thr135, Ser165–Lys193, Glu252–Tyr442, Lys464–Pro614, Glu657–Asp752, Ser814–Pro844, Ala856–Arg911, and Ala1083–Met1109. Residues Thr53 to Thr62 show a composition bias toward low complexity. Residues Met78 to Arg111 are compositionally biased toward basic and acidic residues. Over residues Ser165–Glu189 the composition is skewed to polar residues. Residues Ser279–Lys292 show a composition bias toward low complexity. The segment covering Glu309 to Arg318 has biased composition (polar residues). Over residues Ser319 to Ser330 the composition is skewed to low complexity. The span at Asn338–Arg350 shows a compositional bias: polar residues. The segment covering Glu354–Ser364 has biased composition (acidic residues). 2 stretches are compositionally biased toward basic and acidic residues: residues Ile365–Ile375 and Ser394–Arg408. A compositionally biased stretch (low complexity) spans Leu409–Ser430. 3 stretches are compositionally biased toward basic and acidic residues: residues Lys464–Gln487, Pro495–Gln512, and Arg519–Gln538. Composition is skewed to low complexity over residues Ser594–Ser605 and Glu657–Ser669. Residues Gly678–Ser696 show a composition bias toward polar residues. A compositionally biased stretch (low complexity) spans Ala714 to Gly735. 2 stretches are compositionally biased toward polar residues: residues Val737 to Thr751 and Thr822 to Ser832. Pro residues predominate over residues Leu893–His907. Positions Ser1092 to Ser1107 are enriched in low complexity. The interaction with Klp10A stretch occupies residues Met1115–Met1322. The tract at residues Ser1190–Ala1309 is ALMS motif.

It belongs to the ALMS1 family. As to quaternary structure, interacts (via C-terminus) with Klp10A. Interacts with SAK. As to expression, expressed in all germlines, including germline stem cells and spermatogonia.

It is found in the cytoplasm. The protein localises to the cytoskeleton. Its subcellular location is the microtubule organizing center. The protein resides in the centrosome. It localises to the centriole. Its function is as follows. In asymmetrically dividing germline stem cells (GSCs), plays a critical role in ensuring centrosome duplication, which is essential for the production of centrosomes and centrioles in all downstream germ cells. Might recruit SAK for daughter centriole duplication. The polypeptide is Centrosome-associated protein Alms1a (Drosophila melanogaster (Fruit fly)).